The following is a 256-amino-acid chain: Adenosylcobinamide-GDP ribazoletransferase (256 aa).

Helical transmembrane passes span 40–60 (YFPL…WLVL), 64–84 (PAQG…TGAF), 114–134 (IGAF…QLLS), 143–163 (ILVA…SHLL), 194–214 (VVPL…GLIL), and 234–254 (CLGM…LAWM).

It belongs to the CobS family. Mg(2+) is required as a cofactor.

It localises to the cell inner membrane. The catalysed reaction is alpha-ribazole + adenosylcob(III)inamide-GDP = adenosylcob(III)alamin + GMP + H(+). The enzyme catalyses alpha-ribazole 5'-phosphate + adenosylcob(III)inamide-GDP = adenosylcob(III)alamin 5'-phosphate + GMP + H(+). It functions in the pathway cofactor biosynthesis; adenosylcobalamin biosynthesis; adenosylcobalamin from cob(II)yrinate a,c-diamide: step 7/7. Its function is as follows. Joins adenosylcobinamide-GDP and alpha-ribazole to generate adenosylcobalamin (Ado-cobalamin). Also synthesizes adenosylcobalamin 5'-phosphate from adenosylcobinamide-GDP and alpha-ribazole 5'-phosphate. This is Adenosylcobinamide-GDP ribazoletransferase from Ralstonia pickettii (strain 12J).